A 206-amino-acid chain; its full sequence is Thymidylate kinase (206 aa).

Residue 11-18 coordinates ATP; that stretch reads GIDGAGKT.

This sequence belongs to the thymidylate kinase family.

It carries out the reaction dTMP + ATP = dTDP + ADP. Phosphorylation of dTMP to form dTDP in both de novo and salvage pathways of dTTP synthesis. The sequence is that of Thymidylate kinase from Burkholderia mallei (strain NCTC 10247).